The chain runs to 575 residues: 4-substituted benzoates-glutamate ligase GH3.12 (575 aa).

A coiled-coil region spans residues 6–33 (DINETFEKQLKDLTSNVKSIQDNLLEEI). 95-96 (SS) contributes to the AMP binding site. 120 to 123 (YDLR) is a salicylate binding site. Thr-301, Thr-324, Ser-328, Tyr-347, Asp-398, and Arg-417 together coordinate AMP.

It belongs to the IAA-amido conjugating enzyme family. In terms of assembly, interacts with the P.syringae pv. maculicola effector HopW1-1 (via C-terminus). Expressed in seedlings, mostly in cotyledons, leaves, hypocotyls and sporadically in roots. Not detected in unchallenged adult plants, except in flowers.

Specifically and reversibly inhibited by salicylic acid (SA). In terms of biological role, catalyzes the conjugation of specific amino acids (e.g. Glu and possibly His, Lys, and Met) to their preferred acyl substrates (e.g. 4-substituted benzoates), in a magnesium ion- and ATP-dependent manner. Can use 4-substituted benzoates such as 4-aminobenzoate (pABA), 4-fluorobenzoate and 4-hydroxybenzoate (4-HBA), and, to a lesser extent, benzoate, vanillate and trans-cinnamate, but not 2-substituted benzoates and salicylic acid (SA), as conjugating acyl substrates. Involved in both basal and induced resistance in a SA-dependent manner. Confers resistance to virulent and avirulent pathogens (at least bacteria and oomycetes), and promotes SA glucosides accumulation. Required for the establishment of hyper-sensitive response (HR) upon incompatible interaction and subsequent systemic acquired resistance (SAR). The polypeptide is 4-substituted benzoates-glutamate ligase GH3.12 (GH3.12) (Arabidopsis thaliana (Mouse-ear cress)).